The following is a 138-amino-acid chain: MRTFWIVAVLLVGVEGNLLQFNKMIKIMTKKNAIPSYSSYGCYCGWGGRGRPKDATDRCCFVHDCCYEKLTDCSPKTDTYSYSLKSGVIICGGNDPCKKQICECDKAAAVCFGENLSTYKKRYMFYPDFLCTDPSETC.

An N-terminal signal peptide occupies residues 1-16; it reads MRTFWIVAVLLVGVEG. Disulfide bonds link Cys42-Cys131, Cys44-Cys60, Cys59-Cys111, Cys65-Cys138, Cys66-Cys104, Cys73-Cys97, and Cys91-Cys102. Ca(2+) is bound by residues Tyr43, Gly45, and Gly47. His63 is an active-site residue. A Ca(2+)-binding site is contributed by Asp64. Asp105 is an active-site residue.

It belongs to the phospholipase A2 family. Group II subfamily. D49 sub-subfamily. It depends on Ca(2+) as a cofactor. As to expression, expressed by the venom gland.

It localises to the secreted. It carries out the reaction a 1,2-diacyl-sn-glycero-3-phosphocholine + H2O = a 1-acyl-sn-glycero-3-phosphocholine + a fatty acid + H(+). Snake venom phospholipase A2 (PLA2) that displays edema-inducing activities, as well as presynaptic neurotoxicity and low myotoxicity. PLA2 catalyzes the calcium-dependent hydrolysis of the 2-acyl groups in 3-sn-phosphoglycerides. The chain is Basic phospholipase A2 Sct-N6 from Sistrurus tergeminus (Western massasauga).